The sequence spans 510 residues: Protein ERGIC-53 (510 aa).

A signal peptide spans 1 to 30 (MAGSRRRGLQARVRPLFCALLLSLSRFVGG). Topologically, residues 31 to 477 (DGVGGDPAAG…ELPPFPSCLS (447 aa)) are lumenal. Residues 44 to 267 (RRFEYKYSFK…DVLSFLTFQL (224 aa)) form the L-type lectin-like domain. Serine 88 and aspartate 121 together coordinate a carbohydrate. Positions 152, 154, and 156 each coordinate Ca(2+). Asparagine 156 and histidine 178 together coordinate a carbohydrate. Aspartate 181 is a Ca(2+) binding site. Residues cysteine 190 and cysteine 230 are joined by a disulfide bond. 251-253 (GGL) serves as a coordination point for a carbohydrate. Serine 425 carries the post-translational modification Phosphoserine. Residues 478 to 498 (TVHFIIFVVVQTVLFIGYIMY) form a helical membrane-spanning segment. The Cytoplasmic portion of the chain corresponds to 499–510 (RSQQEAAAKKFF). Residues 499–510 (RSQQEAAAKKFF) form a mediates interaction with RAB3GAP1, RAB3GAP2 and UBXN6 region. Positions 509 to 510 (FF) match the ER export motif motif.

As to quaternary structure, exists both as a covalent disulfide-linked homohexamer, and a complex of three disulfide-linked dimers non-covalently kept together. Interacts with MCFD2. May interact with TMEM115. Interacts with RAB3GAP1 and RAB3GAP2. Interacts with UBXN6. Interacts with SERPINA1/alpha1-antitrypsin. Interacts with BET1.

The protein resides in the endoplasmic reticulum-Golgi intermediate compartment membrane. Its subcellular location is the golgi apparatus membrane. It localises to the endoplasmic reticulum membrane. In terms of biological role, mannose-specific lectin. May recognize sugar residues of glycoproteins, glycolipids, or glycosylphosphatidyl inositol anchors and may be involved in the sorting or recycling of proteins, lipids, or both. The LMAN1-MCFD2 complex forms a specific cargo receptor for the ER-to-Golgi transport of selected proteins. The polypeptide is Protein ERGIC-53 (LMAN1) (Chlorocebus aethiops (Green monkey)).